A 905-amino-acid chain; its full sequence is Tudor domain-containing protein 5 (905 aa).

HTH OST-type domains are found at residues 6-79 and 128-204; these read LLAG…KAIG and AKPA…RSAV. The interval 219 to 264 is disordered; it reads MQSTSPKQRLAGFSPKASSLPERRPEVSLDPSSVSKPEPVKEEQSF. The region spanning 288 to 364 is the HTH OST-type 3 domain; it reads VSQELKEKLR…ESHWMVVEFK (77 aa). A disordered region spans residues 368 to 393; it reads TQPCEPELSPGDGTTSSPTGELQNPS. Residues 379–393 are compositionally biased toward polar residues; sequence DGTTSSPTGELQNPS. In terms of domain architecture, Tudor spans 523 to 581; it reads YVRPGQVCCVAPRDMWFYRVVIHEVFSETEVKVYYVDYGDITKVERHSLRFLKACYADL. Residues 694-728 are disordered; that stretch reads PDAEIDSQGNDSPSSCRTASNSESGETNLASIDVD. Residues 700–723 are compositionally biased toward polar residues; the sequence is SQGNDSPSSCRTASNSESGETNLA.

This sequence belongs to the TDRD5 family.

The protein localises to the cytoplasm. Its function is as follows. Required during spermiogenesis to participate in the repression transposable elements and prevent their mobilization, which is essential for the germline integrity. Probably acts via the piRNA metabolic process, which mediates the repression of transposable elements during meiosis by forming complexes composed of piRNAs and Piwi proteins and govern the methylation and subsequent repression of transposons. This chain is Tudor domain-containing protein 5 (tdrd5), found in Danio rerio (Zebrafish).